Consider the following 89-residue polypeptide: DNA/RNA-binding protein Alba 2 (89 aa).

This sequence belongs to the histone-like Alba family. As to quaternary structure, forms homodimers and homotetramers. Interacts with Alba 1.

Its subcellular location is the cytoplasm. It is found in the chromosome. Its function is as follows. Binds double-stranded DNA tightly but without sequence specificity. Involved in DNA compaction. In Archaeoglobus fulgidus (strain ATCC 49558 / DSM 4304 / JCM 9628 / NBRC 100126 / VC-16), this protein is DNA/RNA-binding protein Alba 2.